Consider the following 1076-residue polypeptide: Structural maintenance of chromosomes protein 5 (1076 aa).

Glycine 49 to serine 56 is an ATP binding site. A coiled-coil region spans residues serine 190 to leucine 415. A compositionally biased stretch (basic and acidic residues) spans glutamate 375 to glutamate 410. Residues glutamate 375 to arginine 420 form a disordered region. Positions asparagine 416–lysine 617 are flexible hinge. 2 coiled-coil regions span residues asparagine 627 to alanine 713 and lysine 749 to histidine 786.

The protein belongs to the SMC family. SMC5 subfamily. Interacts with smc-6. In terms of tissue distribution, expressed in the germline (at protein level).

It localises to the nucleus. The protein resides in the chromosome. In terms of biological role, core component of the smc-5/smc-6 complex. Functions in DNA double strand break repair by promoting sister-chromatid homologous recombination during meiosis. Acts in a DNA repair pathway for removal of ionizing radiation- and ultraviolet (UV) radiation-induced DNA lesions that is distinct from classical nucleotide excision repair and the translesion synthesis pathway. Also involved in the recovery of stalled replication forks. This Caenorhabditis elegans protein is Structural maintenance of chromosomes protein 5.